We begin with the raw amino-acid sequence, 231 residues long: Elongation factor 1-delta (231 aa).

Residues 75–136 (SGVTVEGNAP…AAAAAAKPAK (62 aa)) form a disordered region. Residues 101–117 (ADDDDDDDVDLFGEETE) show a composition bias toward acidic residues. The segment covering 118–127 (EEKKAAEERA) has biased composition (basic and acidic residues).

The protein belongs to the EF-1-beta/EF-1-delta family. As to quaternary structure, EF-1 is composed of 4 subunits: alpha, beta (1B-alpha=beta'), delta (1B-beta), and gamma (1B-gamma).

EF-1-beta and EF-1-beta' stimulate the exchange of GDP bound to EF-1-alpha to GTP. The sequence is that of Elongation factor 1-delta from Beta vulgaris (Sugar beet).